A 136-amino-acid chain; its full sequence is Ribosome-binding factor A (136 aa).

Belongs to the RbfA family. In terms of assembly, monomer. Binds 30S ribosomal subunits, but not 50S ribosomal subunits or 70S ribosomes.

It localises to the cytoplasm. One of several proteins that assist in the late maturation steps of the functional core of the 30S ribosomal subunit. Associates with free 30S ribosomal subunits (but not with 30S subunits that are part of 70S ribosomes or polysomes). Required for efficient processing of 16S rRNA. May interact with the 5'-terminal helix region of 16S rRNA. The sequence is that of Ribosome-binding factor A from Photorhabdus laumondii subsp. laumondii (strain DSM 15139 / CIP 105565 / TT01) (Photorhabdus luminescens subsp. laumondii).